A 186-amino-acid chain; its full sequence is PRA1 family protein G2 (186 aa).

Helical transmembrane passes span 66 to 86, 87 to 107, 119 to 139, and 142 to 162; these read YFFV…LITA, SPVA…FHFF, VGDR…IWFT, and AVNL…HAVF.

The protein belongs to the PRA1 family. As to expression, expressed in roots and trichomes.

It localises to the endoplasmic reticulum membrane. May be involved in both secretory and endocytic intracellular trafficking in the endosomal/prevacuolar compartments. This chain is PRA1 family protein G2 (PRA1G2), found in Arabidopsis thaliana (Mouse-ear cress).